The primary structure comprises 362 residues: Phosphoserine aminotransferase (362 aa).

2 residues coordinate L-glutamate: serine 9 and arginine 42. Pyridoxal 5'-phosphate contacts are provided by residues glycine 76–arginine 77, tryptophan 102, threonine 153, aspartate 174, and glutamine 197. At lysine 198 the chain carries N6-(pyridoxal phosphate)lysine. Asparagine 239 to threonine 240 contributes to the pyridoxal 5'-phosphate binding site.

It belongs to the class-V pyridoxal-phosphate-dependent aminotransferase family. SerC subfamily. In terms of assembly, homodimer. Pyridoxal 5'-phosphate is required as a cofactor.

The protein resides in the cytoplasm. The catalysed reaction is O-phospho-L-serine + 2-oxoglutarate = 3-phosphooxypyruvate + L-glutamate. It carries out the reaction 4-(phosphooxy)-L-threonine + 2-oxoglutarate = (R)-3-hydroxy-2-oxo-4-phosphooxybutanoate + L-glutamate. Its pathway is amino-acid biosynthesis; L-serine biosynthesis; L-serine from 3-phospho-D-glycerate: step 2/3. It participates in cofactor biosynthesis; pyridoxine 5'-phosphate biosynthesis; pyridoxine 5'-phosphate from D-erythrose 4-phosphate: step 3/5. Catalyzes the reversible conversion of 3-phosphohydroxypyruvate to phosphoserine and of 3-hydroxy-2-oxo-4-phosphonooxybutanoate to phosphohydroxythreonine. This is Phosphoserine aminotransferase from Salmonella arizonae (strain ATCC BAA-731 / CDC346-86 / RSK2980).